The chain runs to 261 residues: Carnitinyl-CoA dehydratase (261 aa).

Residue E111 is the Nucleophile of the active site. The active-site Proton acceptor is E131.

Belongs to the enoyl-CoA hydratase/isomerase family.

The catalysed reaction is (R)-carnitinyl-CoA = crotonobetainyl-CoA + H2O. The protein operates within amine and polyamine metabolism; carnitine metabolism. Its function is as follows. Catalyzes the reversible dehydration of L-carnitinyl-CoA to crotonobetainyl-CoA. The protein is Carnitinyl-CoA dehydratase of Escherichia coli (strain SMS-3-5 / SECEC).